We begin with the raw amino-acid sequence, 72 residues long: Protein CYSTEINE-RICH TRANSMEMBRANE MODULE 9 (72 aa).

A compositionally biased stretch (polar residues) spans 1–22 (MNPSEQNHLSVEKPSQTSSGPY). The interval 1–46 (MNPSEQNHLSVEKPSQTSSGPYTSPPPIGYPTRDAMVGDPPAAAVE) is disordered. A helical transmembrane segment spans residues 49-65 (SKGDGFWKGCCAAICCC).

Belongs to the CYSTM1 family. In terms of assembly, heterodimers. Interacts with WIH1/CYSTM13. As to expression, mostly expressed in roots and flowers and, to a lower extent, in stems, siliques and leaves.

Its subcellular location is the cell membrane. It localises to the nucleus. Involved in resistance to abiotic stress. The polypeptide is Protein CYSTEINE-RICH TRANSMEMBRANE MODULE 9 (Arabidopsis thaliana (Mouse-ear cress)).